The chain runs to 20 residues: Antimicrobial peptide EP-20 (20 aa).

The interval 1-20 (EGPVGLADPDGPASAPLGAP) is disordered.

It is found in the secreted. Its function is as follows. The synthetic peptide inhibits growth of fungus P.capsici and partially that of V.dahliae, F.graminearum and F.omysporum. This is Antimicrobial peptide EP-20 from Xenorhabdus budapestensis.